Consider the following 426-residue polypeptide: Gamma-glutamyl phosphate reductase (426 aa).

Belongs to the gamma-glutamyl phosphate reductase family.

The protein localises to the cytoplasm. It carries out the reaction L-glutamate 5-semialdehyde + phosphate + NADP(+) = L-glutamyl 5-phosphate + NADPH + H(+). It participates in amino-acid biosynthesis; L-proline biosynthesis; L-glutamate 5-semialdehyde from L-glutamate: step 2/2. Functionally, catalyzes the NADPH-dependent reduction of L-glutamate 5-phosphate into L-glutamate 5-semialdehyde and phosphate. The product spontaneously undergoes cyclization to form 1-pyrroline-5-carboxylate. The sequence is that of Gamma-glutamyl phosphate reductase from Sorangium cellulosum (strain So ce56) (Polyangium cellulosum (strain So ce56)).